A 187-amino-acid polypeptide reads, in one-letter code: Ubiquinone biosynthesis protein COQ4 homolog, mitochondrial (187 aa).

Residues His77, Asp78, His81, and Glu93 each contribute to the Zn(2+) site.

This sequence belongs to the COQ4 family. As to quaternary structure, component of a multi-subunit COQ enzyme complex. It depends on Zn(2+) as a cofactor.

It is found in the mitochondrion inner membrane. The catalysed reaction is a 4-hydroxy-3-methoxy-5-(all-trans-polyprenyl)benzoate + H(+) = a 2-methoxy-6-(all-trans-polyprenyl)phenol + CO2. Its pathway is cofactor biosynthesis; ubiquinone biosynthesis. Functionally, lyase that catalyzes the C1-decarboxylation of 4-hydroxy-3-methoxy-5-(all-trans-polyprenyl)benzoic acid into 2-methoxy-6-(all-trans-polyprenyl)phenol during ubiquinone biosynthesis. This Leishmania major protein is Ubiquinone biosynthesis protein COQ4 homolog, mitochondrial.